Consider the following 234-residue polypeptide: MTPHINAKIGDFYPQCLLCGDPLRVSYIAKKFLQDAKEITNVRNMLGFSGKYKGKGISLMGHGMGIASCTIYVTELIKTYQVKELLRIGTCGAISPKVGLKDIIMAMGASTDSKTNRVRFLNHDLSATPDFELSLRAYQTAKRLGIDLKVGNVFSSDFFYSFETHAFDLMVQYNHLAIEMEAAGLYATAMELNAKALCLCSVSDHLITKEALSPKERVESFDNMIILALEMMTQ.

Residue histidine 4 coordinates a purine D-ribonucleoside. Phosphate contacts are provided by residues glycine 20, arginine 24, arginine 43, and 87–90 (RIGT). Residues 179-181 (EME) and 203-204 (SD) each bind a purine D-ribonucleoside. Aspartate 204 functions as the Proton donor in the catalytic mechanism.

The protein belongs to the PNP/UDP phosphorylase family. In terms of assembly, homohexamer; trimer of homodimers.

The enzyme catalyses a purine D-ribonucleoside + phosphate = a purine nucleobase + alpha-D-ribose 1-phosphate. The catalysed reaction is a purine 2'-deoxy-D-ribonucleoside + phosphate = a purine nucleobase + 2-deoxy-alpha-D-ribose 1-phosphate. Functionally, catalyzes the reversible phosphorolytic breakdown of the N-glycosidic bond in the beta-(deoxy)ribonucleoside molecules, with the formation of the corresponding free purine bases and pentose-1-phosphate. This chain is Purine nucleoside phosphorylase DeoD-type, found in Helicobacter pylori (strain Shi470).